Consider the following 301-residue polypeptide: Phosducin-like protein (301 aa).

Threonine 2 is modified (N-acetylthreonine). Residues 17–60 are disordered; sequence YSTSEDEDSDHEDKDRGRGAPAISSTPAEAELAGEGISINTGPK. Phosphoserine is present on residues serine 20, serine 25, serine 226, serine 293, and serine 296. A Phosducin domain is found at 36 to 299; that stretch reads APAISSTPAE…TCHSEDSDLE (264 aa). Residues 158 to 301 form a thioredoxin fold region; it reads FKQVFEIPSG…HSEDSDLEID (144 aa).

The protein belongs to the phosducin family. In terms of assembly, forms a complex with the beta and gamma subunits of the GTP-binding protein, transducin. Interacts with the CCT chaperonin complex.

The protein localises to the cell projection. It is found in the cilium. Its function is as follows. Functions as a co-chaperone for CCT in the assembly of heterotrimeric G protein complexes, facilitates the assembly of both Gbeta-Ggamma and RGS-Gbeta5 heterodimers. Also acts as a positive regulator of hedgehog signaling and regulates ciliary function. The sequence is that of Phosducin-like protein (Pdcl) from Mus musculus (Mouse).